A 379-amino-acid chain; its full sequence is UDP-4-amino-4-deoxy-L-arabinose--oxoglutarate aminotransferase (379 aa).

N6-(pyridoxal phosphate)lysine is present on Lys182.

The protein belongs to the DegT/DnrJ/EryC1 family. ArnB subfamily. Homodimer. The cofactor is pyridoxal 5'-phosphate.

The catalysed reaction is UDP-4-amino-4-deoxy-beta-L-arabinose + 2-oxoglutarate = UDP-beta-L-threo-pentopyranos-4-ulose + L-glutamate. It functions in the pathway nucleotide-sugar biosynthesis; UDP-4-deoxy-4-formamido-beta-L-arabinose biosynthesis; UDP-4-deoxy-4-formamido-beta-L-arabinose from UDP-alpha-D-glucuronate: step 2/3. It participates in bacterial outer membrane biogenesis; lipopolysaccharide biosynthesis. Its function is as follows. Catalyzes the conversion of UDP-4-keto-arabinose (UDP-Ara4O) to UDP-4-amino-4-deoxy-L-arabinose (UDP-L-Ara4N). The modified arabinose is attached to lipid A and is required for resistance to polymyxin and cationic antimicrobial peptides. The polypeptide is UDP-4-amino-4-deoxy-L-arabinose--oxoglutarate aminotransferase (Shigella sonnei (strain Ss046)).